The sequence spans 94 residues: PTS system galactitol-specific EIIB component (94 aa).

The 94-residue stretch at 1 to 94 folds into the PTS EIIB type-2 domain; the sequence is MKRKIIVACG…QNKILTILQG (94 aa). The active-site Phosphocysteine intermediate; for EIIB activity is C9. C9 is modified (phosphocysteine; by EIIA).

As to quaternary structure, forms a complex with one each of subunit of GatA, GatB and 2 subunits of GatC.

It is found in the cytoplasm. It carries out the reaction galactitol(out) + N(pros)-phospho-L-histidyl-[protein] = galactitol 1-phosphate(in) + L-histidyl-[protein]. In terms of biological role, the phosphoenolpyruvate-dependent sugar phosphotransferase system (PTS), a major carbohydrate active transport system, catalyzes the phosphorylation of incoming sugar substrates concomitant with their translocation across the cell membrane. The enzyme II complex composed of GatA, GatB and GatC is involved in galactitol transport. It can also use D-glucitol. The sequence is that of PTS system galactitol-specific EIIB component from Escherichia coli (strain K12).